The sequence spans 346 residues: MSGVSSVMLGLRPATRIFFRSNISVSPSRTFVSYIGRSQSTSILKNAPNLEDNVTNLQKIIPKRFFSQTSILKSRWKPIFNEETTNRYVRLNRFQQYQQQRSGGNPLGSMTILGLSLMAGIYFGSPYLFEHVPPFTYFKTHPKNLVYALLGINVAVFGLWQLPKCWRFLQKYMLLQKDYVTSKISIIGSAFSHQEFWHLGMNMLALWSFGTSLATMLGASNFFSLYMNSAIAGSLFSLWYPKLARLAIVGPSLGASGALFGVLGCFSYLFPHAKILLFVFPVPGGAWVAFLASVAWNAAGCALRWGSFDYAAHLGGSMMGVLYGWYISKAVEKQRQRRLQAAGRWF.

A mitochondrion-targeting transit peptide spans 1 to 73 (MSGVSSVMLG…RFFSQTSILK (73 aa)). A run of 6 helical transmembrane segments spans residues 109–129 (SMTI…PYLF), 145–165 (LVYA…LPKC), 203–223 (MLAL…SNFF), 246–266 (LAIV…LGCF), 275–295 (ILLF…ASVA), and 308–328 (FDYA…WYIS). The active-site Nucleophile is S256. H313 is a catalytic residue.

It belongs to the peptidase S54 family.

The protein resides in the mitochondrion inner membrane. It catalyses the reaction Cleaves type-1 transmembrane domains using a catalytic dyad composed of serine and histidine that are contributed by different transmembrane domains.. Functionally, mitochondrial rhomboid serine protease processing the mitochondrial membrane fusion regulator MGM1, and the cytochrome c peroxidase (CCP1). Required for TIM11 stability, ATP synthase complex assembly, mitochondrial morphology, cytochrome c (CYC1) storage and mitochondrial genome maintenance. The protein is Rhomboid protein 1, mitochondrial (PCP1) of Saccharomyces cerevisiae (strain ATCC 204508 / S288c) (Baker's yeast).